The primary structure comprises 356 residues: Phosphoribosyl pyrophosphate synthase-associated protein 1 (356 aa).

M1 is modified (N-acetylmethionine). S177 and S215 each carry phosphoserine.

It belongs to the ribose-phosphate pyrophosphokinase family. Binds to PRPS1 and PRPS2.

In terms of biological role, seems to play a negative regulatory role in 5-phosphoribose 1-diphosphate synthesis. The chain is Phosphoribosyl pyrophosphate synthase-associated protein 1 (PRPSAP1) from Bos taurus (Bovine).